The primary structure comprises 204 residues: Holliday junction branch migration complex subunit RuvA (204 aa).

The interval 1–65 (MIGRLRGAVA…SAGLRLYGFG (65 aa)) is domain I. Residues 66-142 (TREDRRAFVL…PITDGPVLMT (77 aa)) are domain II. Positions 143–152 (APGAVAAAPA) are flexible linker. A domain III region spans residues 152-204 (AKAAPTGDAVAALMGLGVAEVNARRVVEAAAAKLGDEATVQALIKAGLQELGR).

This sequence belongs to the RuvA family. In terms of assembly, homotetramer. Forms an RuvA(8)-RuvB(12)-Holliday junction (HJ) complex. HJ DNA is sandwiched between 2 RuvA tetramers; dsDNA enters through RuvA and exits via RuvB. An RuvB hexamer assembles on each DNA strand where it exits the tetramer. Each RuvB hexamer is contacted by two RuvA subunits (via domain III) on 2 adjacent RuvB subunits; this complex drives branch migration. In the full resolvosome a probable DNA-RuvA(4)-RuvB(12)-RuvC(2) complex forms which resolves the HJ.

The protein localises to the cytoplasm. Functionally, the RuvA-RuvB-RuvC complex processes Holliday junction (HJ) DNA during genetic recombination and DNA repair, while the RuvA-RuvB complex plays an important role in the rescue of blocked DNA replication forks via replication fork reversal (RFR). RuvA specifically binds to HJ cruciform DNA, conferring on it an open structure. The RuvB hexamer acts as an ATP-dependent pump, pulling dsDNA into and through the RuvAB complex. HJ branch migration allows RuvC to scan DNA until it finds its consensus sequence, where it cleaves and resolves the cruciform DNA. The protein is Holliday junction branch migration complex subunit RuvA of Caulobacter sp. (strain K31).